We begin with the raw amino-acid sequence, 238 residues long: Glycerol uptake facilitator protein 4 (238 aa).

A run of 2 helical transmembrane segments spans residues 2 to 22 (IHQL…GVGV) and 39 to 59 (IFAI…FGNV). The short motif at 62-64 (NPA) is the NPA 1 element. Transmembrane regions (helical) follow at residues 80-100 (FIPY…IVWI), 135-155 (FFVE…ISEV), and 158-178 (PGIV…GLGG). An NPA 2 motif is present at residues 185–187 (NLA). A helical membrane pass occupies residues 211–231 (YGIIVPGIAPFVGAACAALFM).

Belongs to the MIP/aquaporin (TC 1.A.8) family.

It is found in the cell membrane. Functionally, transporter that facilitates the transmembrane diffusion of water, dihydroxyacetone, glycerol, urea, H(2)O(2) and D/L-lactic acid. Is involved in the cellular racemization of lactate and lactate metabolism, but has likely a more general physiological role. The transported molecule is indeed lactic acid and not the lactate anion, in agreement with the assumption that, with very few exceptions, MIPs (major intrinsic proteins) only facilitate the transport of uncharged solutes. The polypeptide is Glycerol uptake facilitator protein 4 (Lactiplantibacillus plantarum (strain ATCC BAA-793 / NCIMB 8826 / WCFS1) (Lactobacillus plantarum)).